The following is a 250-amino-acid chain: Silencing boundary-establishment protein FUB1 (250 aa).

Residues Pro179 to Ile250 are disordered. Positions Pro202–Met213 are enriched in basic and acidic residues. Over residues Pro229–Ile250 the composition is skewed to gly residues.

The protein belongs to the proteasome inhibitor PI31 family. In terms of assembly, interacts with the 20S proteasome.

In terms of biological role, plays a role in the establishment of transcriptional silencing boundaries, preventing the propagation of heterochromatic silencing. This Saccharomyces cerevisiae (strain ATCC 204508 / S288c) (Baker's yeast) protein is Silencing boundary-establishment protein FUB1.